We begin with the raw amino-acid sequence, 465 residues long: Sperm microtubule associated protein 2-like (465 aa).

Over residues 1-29 (MENQEFLSSSAPSEVTDGQVSTEISTCSE) the composition is skewed to polar residues. Positions 1–140 (MENQEFLSSS…REAKETELLP (140 aa)) are disordered. Basic and acidic residues-rich tracts occupy residues 40-70 (LDTH…QDQR) and 114-137 (KARE…KETE). THEG repeat units lie at residues 174 to 192 (RKCF…PKKQ), 214 to 233 (GALK…PKEV), 260 to 279 (PALF…PNGF), 297 to 316 (SLRI…AKGT), 333 to 352 (STLS…PRIK), 373 to 392 (AAMI…SKSV), 409 to 428 (ATTH…PNKR), and 446 to 465 (AALK…PLTR).

This Homo sapiens (Human) protein is Sperm microtubule associated protein 2-like.